We begin with the raw amino-acid sequence, 138 residues long: Putative pre-16S rRNA nuclease (138 aa).

It belongs to the YqgF nuclease family.

It is found in the cytoplasm. Could be a nuclease involved in processing of the 5'-end of pre-16S rRNA. This is Putative pre-16S rRNA nuclease from Karelsulcia muelleri (strain GWSS) (Sulcia muelleri).